A 186-amino-acid polypeptide reads, in one-letter code: Type 1 phosphatases regulator ypi-1 (186 aa).

Over residues 1–32 (MTSVAQRQAQPAQPSTSQTAAPTRTQTETSSP) the composition is skewed to polar residues. The interval 1 to 186 (MTSVAQRQAQ…SETQGPGGSK (186 aa)) is disordered. A compositionally biased stretch (low complexity) spans 82–94 (DSSSSSDSSSSSD). Residues 122 to 137 (HDHDHDGREGGCNHDH) show a composition bias toward basic and acidic residues. The segment covering 138-151 (GRGRKHGNKGKKTE) has biased composition (basic residues).

The protein belongs to the YPI1 family.

It is found in the nucleus. Regulator of type 1 phosphatases which maintains protein phosphatase activity under strict control. The chain is Type 1 phosphatases regulator ypi-1 (ypi-1) from Neurospora crassa (strain ATCC 24698 / 74-OR23-1A / CBS 708.71 / DSM 1257 / FGSC 987).